A 57-amino-acid polypeptide reads, in one-letter code: Protein GnsA (57 aa).

This sequence belongs to the gns family.

The chain is Protein GnsA (gnsA) from Escherichia coli O6:H1 (strain CFT073 / ATCC 700928 / UPEC).